The chain runs to 117 residues: Immunoglobulin kappa variable 1-33 (117 aa).

The first 22 residues, 1–22, serve as a signal peptide directing secretion; it reads MDMRVPAQLLGLLLLWLSGARC. The framework-1 stretch occupies residues 23–45; that stretch reads DIQMTQSPSSLSASVGDRVTITC. The region spanning 24–117 is the Ig-like domain; it reads IQMTQSPSSL…YYCQQYDNLP (94 aa). A disulfide bond links Cys-45 and Cys-110. The interval 46–56 is complementarity-determining-1; it reads QASQDISNYLN. The interval 57-71 is framework-2; that stretch reads WYQQKPGKAPKLLIY. Residues 72–78 are complementarity-determining-2; that stretch reads DASNLET. The framework-3 stretch occupies residues 79 to 110; that stretch reads GVPSRFSGSGSGTDFTFTISSLQPEDIATYYC. The interval 111–117 is complementarity-determining-3; sequence QQYDNLP.

In terms of assembly, immunoglobulins are composed of two identical heavy chains and two identical light chains; disulfide-linked.

The protein resides in the secreted. Its subcellular location is the cell membrane. V region of the variable domain of immunoglobulin light chains that participates in the antigen recognition. Immunoglobulins, also known as antibodies, are membrane-bound or secreted glycoproteins produced by B lymphocytes. In the recognition phase of humoral immunity, the membrane-bound immunoglobulins serve as receptors which, upon binding of a specific antigen, trigger the clonal expansion and differentiation of B lymphocytes into immunoglobulins-secreting plasma cells. Secreted immunoglobulins mediate the effector phase of humoral immunity, which results in the elimination of bound antigens. The antigen binding site is formed by the variable domain of one heavy chain, together with that of its associated light chain. Thus, each immunoglobulin has two antigen binding sites with remarkable affinity for a particular antigen. The variable domains are assembled by a process called V-(D)-J rearrangement and can then be subjected to somatic hypermutations which, after exposure to antigen and selection, allow affinity maturation for a particular antigen. This is Immunoglobulin kappa variable 1-33 from Homo sapiens (Human).